The chain runs to 944 residues: Thyroid peroxidase (944 aa).

A signal peptide spans 1–30; it reads MVGLVPAGSAWGGRALAVLGVTLLVALARG. Topologically, residues 31-858 are extracellular; that stretch reads LLPFFLGGRD…SGRLPKASLV (828 aa). Asn-141 carries N-linked (GlcNAc...) asparagine glycosylation. A disulfide bridge connects residues Cys-154 and Cys-170. Asp-250 is a binding site for heme b. His-251 (proton acceptor) is an active-site residue. Asp-252 provides a ligand contact to Ca(2+). 2 disulfide bridges follow: Cys-271–Cys-281 and Cys-275–Cys-295. N-linked (GlcNAc...) asparagine glycosylation occurs at Asn-316. Residues Thr-330, Phe-332, Asp-334, and Ser-336 each coordinate Ca(2+). The N-linked (GlcNAc...) asparagine glycan is linked to Asn-351. Residues Glu-408 and His-503 each coordinate heme b. 7 disulfide bridges follow: Cys-606/Cys-663, Cys-704/Cys-729, Cys-750/Cys-790, Cys-776/Cys-802, Cys-808/Cys-822, Cys-816/Cys-831, and Cys-833/Cys-846. N-linked (GlcNAc...) asparagine glycosylation occurs at Asn-623. Residues 748-804 form the Sushi domain; it reads DACGLPDSLDNGDVVLCGEAGRRVLVFSCRHGFKLQGPEQVACSPRGGAVRAPVCRD. The EGF-like; calcium-binding domain maps to 804-847; the sequence is DINECEDASHPPCHGSARCRNTKGGFRCECTDPAVLGEDGTTCV. A helical transmembrane segment spans residues 859–879; the sequence is SIALGIVLVVGLAGLTWTLVC. Topologically, residues 880 to 944 are cytoplasmic; sequence RWAHAGRKAS…RSHVAQGSPA (65 aa). Residues 895 to 944 are disordered; it reads LGGRGAPPPGRGAGQDGASGSLVPPLGPQGRTRAVDPTSSRSHVAQGSPA. A compositionally biased stretch (polar residues) spans 931–944; the sequence is PTSSRSHVAQGSPA.

This sequence belongs to the peroxidase family. XPO subfamily. In terms of assembly, interacts with DUOX1, DUOX2 and CYBA. It depends on Ca(2+) as a cofactor. Heme b serves as cofactor. Post-translationally, heme is covalently bound through a H(2)O(2)-dependent autocatalytic process. Heme insertion is important for the delivery of protein at the cell surface. In terms of processing, cleaved in its N-terminal part.

The protein resides in the membrane. It carries out the reaction 2 iodide + H2O2 + 2 H(+) = diiodine + 2 H2O. The enzyme catalyses [thyroglobulin]-L-tyrosine + iodide + H2O2 + H(+) = [thyroglobulin]-3-iodo-L-tyrosine + 2 H2O. It catalyses the reaction [thyroglobulin]-3-iodo-L-tyrosine + iodide + H2O2 + H(+) = [thyroglobulin]-3,5-diiodo-L-tyrosine + 2 H2O. The catalysed reaction is 2 [thyroglobulin]-3,5-diiodo-L-tyrosine + H2O2 = [thyroglobulin]-L-thyroxine + [thyroglobulin]-dehydroalanine + 2 H2O. It carries out the reaction [thyroglobulin]-3-iodo-L-tyrosine + [thyroglobulin]-3,5-diiodo-L-tyrosine + H2O2 = [thyroglobulin]-3,3',5-triiodo-L-thyronine + [thyroglobulin]-dehydroalanine + 2 H2O. It participates in hormone biosynthesis; thyroid hormone biosynthesis. Iodination and coupling of the hormonogenic tyrosines in thyroglobulin to yield the thyroid hormones T(3) and T(4). In Canis lupus familiaris (Dog), this protein is Thyroid peroxidase (TPO).